The sequence spans 607 residues: Phosphogluconate dehydratase (607 aa).

Positions 156 and 223 each coordinate [4Fe-4S] cluster.

The protein belongs to the IlvD/Edd family. The cofactor is [4Fe-4S] cluster.

The enzyme catalyses 6-phospho-D-gluconate = 2-dehydro-3-deoxy-6-phospho-D-gluconate + H2O. It functions in the pathway carbohydrate metabolism; Entner-Doudoroff pathway. In terms of biological role, catalyzes the dehydration of 6-phospho-D-gluconate to 2-dehydro-3-deoxy-6-phospho-D-gluconate. The protein is Phosphogluconate dehydratase of Zymomonas mobilis subsp. mobilis (strain ATCC 31821 / ZM4 / CP4).